The following is a 296-amino-acid chain: Bifunctional protein FolD 1/3 (296 aa).

Residues 166 to 168 (GRS), S191, and I232 contribute to the NADP(+) site.

Belongs to the tetrahydrofolate dehydrogenase/cyclohydrolase family. Homodimer.

It carries out the reaction (6R)-5,10-methylene-5,6,7,8-tetrahydrofolate + NADP(+) = (6R)-5,10-methenyltetrahydrofolate + NADPH. The catalysed reaction is (6R)-5,10-methenyltetrahydrofolate + H2O = (6R)-10-formyltetrahydrofolate + H(+). Its pathway is one-carbon metabolism; tetrahydrofolate interconversion. Its function is as follows. Catalyzes the oxidation of 5,10-methylenetetrahydrofolate to 5,10-methenyltetrahydrofolate and then the hydrolysis of 5,10-methenyltetrahydrofolate to 10-formyltetrahydrofolate. This chain is Bifunctional protein FolD 1/3, found in Ruegeria pomeroyi (strain ATCC 700808 / DSM 15171 / DSS-3) (Silicibacter pomeroyi).